Reading from the N-terminus, the 218-residue chain is Small ribosomal subunit protein uS3c (218 aa).

In terms of domain architecture, KH type-2 spans 47-118 (VYKNIRNSSN…KLRMTLTEVT (72 aa)).

Belongs to the universal ribosomal protein uS3 family. Part of the 30S ribosomal subunit.

Its subcellular location is the plastid. The protein resides in the chloroplast. This Physcomitrium patens (Spreading-leaved earth moss) protein is Small ribosomal subunit protein uS3c (rps3).